A 501-amino-acid chain; its full sequence is Cytochrome P450 76M5 (501 aa).

A helical transmembrane segment spans residues 5–25 (ELWVLAAALAVSLLYYLAALM). Cysteine 443 is a heme binding site.

The protein belongs to the cytochrome P450 family. Requires heme as cofactor.

It localises to the membrane. The catalysed reaction is ent-sandaracopimaradien-3beta-ol + reduced [NADPH--hemoprotein reductase] + O2 = oryzalexin E + oxidized [NADPH--hemoprotein reductase] + H2O + H(+). Enzyme of the diterpenoid metabolism involved in the biosynthesis of the oryzalexin class of phytoalexins. Hydroxylates ent-sandaracopimaradien. The sequence is that of Cytochrome P450 76M5 from Oryza sativa subsp. japonica (Rice).